The following is a 313-amino-acid chain: Methionyl-tRNA formyltransferase (313 aa).

112-115 (SLLP) is a binding site for (6S)-5,6,7,8-tetrahydrofolate.

The protein belongs to the Fmt family.

The enzyme catalyses L-methionyl-tRNA(fMet) + (6R)-10-formyltetrahydrofolate = N-formyl-L-methionyl-tRNA(fMet) + (6S)-5,6,7,8-tetrahydrofolate + H(+). Its function is as follows. Attaches a formyl group to the free amino group of methionyl-tRNA(fMet). The formyl group appears to play a dual role in the initiator identity of N-formylmethionyl-tRNA by promoting its recognition by IF2 and preventing the misappropriation of this tRNA by the elongation apparatus. This is Methionyl-tRNA formyltransferase from Roseiflexus castenholzii (strain DSM 13941 / HLO8).